The primary structure comprises 160 residues: Transcriptional repressor NrdR (160 aa).

Residues 3 to 34 (CPACNYNGTKVLDSRPVQDFGSIRRRRECESC) fold into a zinc finger. The region spanning 49–139 (LIIVKKDGTR…VYKQFKDINV (91 aa)) is the ATP-cone domain.

Belongs to the NrdR family. Zn(2+) is required as a cofactor.

In terms of biological role, negatively regulates transcription of bacterial ribonucleotide reductase nrd genes and operons by binding to NrdR-boxes. The polypeptide is Transcriptional repressor NrdR (Exiguobacterium sibiricum (strain DSM 17290 / CCUG 55495 / CIP 109462 / JCM 13490 / 255-15)).